Reading from the N-terminus, the 265-residue chain is Palmitoyltransferase ZDHHC21 (265 aa).

At 1–16 (MGLRIHFVVDPHGWCC) the chain is on the cytoplasmic side. A helical membrane pass occupies residues 17–37 (MGLIVFVWLYNIVLIPKIVLF). Topologically, residues 38-44 (PHYEEGH) are extracellular. The helical transmembrane segment at 45–65 (IPGILIIIFYGISIFCLVALV) threads the bilayer. Residues 66–133 (RASITDPGRL…NNCVGEDNHW (68 aa)) lie on the Cytoplasmic side of the membrane. In terms of domain architecture, DHHC spans 90 to 140 (ELCNKCNLMRPKRSHHCSRCGHCVRRMDHHCPWINNCVGEDNHWLFLQLCF). Residue Cys-120 is the S-palmitoyl cysteine intermediate of the active site. A helical transmembrane segment spans residues 134–154 (LFLQLCFYTELLTCYALMFSF). Residues 155–185 (CHYYYFLPLKKRNLDLFVFRHELAIMRLAAF) lie on the Extracellular side of the membrane. Residues 186-206 (MGITMLVGITGLFYTQLIGII) form a helical membrane-spanning segment. Over 207–265 (TDTTSIEKMSNCCEDISRPRKPWQQTFSEVFGTRWKILWFIPFRQRQPLRVPYHFANHV) the chain is Cytoplasmic.

This sequence belongs to the DHHC palmitoyltransferase family. In terms of tissue distribution, widely expressed.

It localises to the golgi apparatus membrane. The protein localises to the golgi apparatus. Its subcellular location is the cis-Golgi network membrane. The protein resides in the cell membrane. It carries out the reaction L-cysteinyl-[protein] + hexadecanoyl-CoA = S-hexadecanoyl-L-cysteinyl-[protein] + CoA. Palmitoyltransferase that catalyzes the addition of palmitate onto various protein substrates. Palmitoylates sex steroid hormone receptors, including ESR1, PGR and AR, thereby regulating their targeting to the plasma membrane. This affects rapid intracellular signaling by sex hormones via ERK and AKT kinases and the generation of cAMP, but does not affect that mediated by their nuclear receptor. Palmitoylates FYN, regulates its localization in hair follicles and plays a key role in epidermal homeostasis and hair follicle differentiation. Through the palmitoylation of PLCB1 and the regulation of PLCB1 downstream signaling may indirectly regulate the function of the endothelial barrier and the adhesion of leukocytes to the endothelium. Also has a palmitoyltransferase activity toward ADRA1D, positively regulating its activity and expression and may thereby play a role in vascular contraction. May also palmitoylate eNOS and LCK. This Homo sapiens (Human) protein is Palmitoyltransferase ZDHHC21.